The sequence spans 253 residues: 5'-nucleotidase SurE (253 aa).

Aspartate 8, aspartate 9, serine 40, and asparagine 93 together coordinate a divalent metal cation.

This sequence belongs to the SurE nucleotidase family. The cofactor is a divalent metal cation.

It is found in the cytoplasm. It carries out the reaction a ribonucleoside 5'-phosphate + H2O = a ribonucleoside + phosphate. Nucleotidase that shows phosphatase activity on nucleoside 5'-monophosphates. In Haemophilus ducreyi (strain 35000HP / ATCC 700724), this protein is 5'-nucleotidase SurE.